Consider the following 1150-residue polypeptide: Fl(2)d-associated complex component (1150 aa).

Residues 1-10 (MEKKAKESLR) show a composition bias toward basic and acidic residues. Disordered regions lie at residues 1–444 (MEKK…EEER), 477–710 (QGRE…PPPL), 833–914 (ASED…MDTN), and 1034–1053 (KEQGQQRELDGDEEPPAKIP). The segment covering 11–20 (RYKKAARHSA) has biased composition (basic residues). Over residues 21–44 (THSSSSDSTSDSDSGSSSYSSTDS) the composition is skewed to low complexity. Gly residues predominate over residues 47–69 (GVGGVGVGVGVPGGAGGPGGSGS). Over residues 72–97 (GHPHTHGHGHHPRSAERHHRKKKSSR) the composition is skewed to basic residues. The segment covering 98–107 (RGGSSSGDEP) has biased composition (low complexity). Composition is skewed to basic residues over residues 110 to 144 (SRRKRDKRDHVQKKLVAKRNHIKRKLKEARLKKRA) and 162 to 175 (AKLKKLAERKRLRA). Residues 122–147 (KKLVAKRNHIKRKLKEARLKKRAAAA) are a coiled coil. Basic and acidic residues predominate over residues 176–199 (ASKEQRERDKLRVVQRDRERDHHR). A compositionally biased stretch (low complexity) spans 202 to 215 (SSRSPPSSSTTTTT). Positions 269–347 (PSLERERERE…KLRRQEEEEG (79 aa)) form a coiled coil. Basic and acidic residues-rich tracts occupy residues 270–414 (SLER…DEMR), 428–444 (YAPRLRDPRELYSEEER), and 492–529 (PDERERLIRDRERDRERERDRERERNIGPRGDFRPEWE). A compositionally biased stretch (gly residues) spans 537–558 (AGGGPGGPSGTPGRPGGFVGGP). Basic and acidic residues-rich tracts occupy residues 589-611 (ERERERERERDRERERDREDRPD) and 630-640 (WLEHDQREKPR). Residues 660-669 (PPAPSHPHPA) show a composition bias toward pro residues. The span at 693 to 702 (GHGDHGERPG) shows a compositional bias: basic and acidic residues. A compositionally biased stretch (low complexity) spans 851–861 (QSLNLNQSLSS). Residues 879–889 (ELSEISDSDDD) are compositionally biased toward acidic residues. Over residues 890 to 903 (ILNKTDKVRPKNEL) the composition is skewed to basic and acidic residues. Positions 905–914 (TETEQEMDTN) are enriched in acidic residues.

The protein belongs to the ZC3H13 family. Component of the WMM complex, a N6-methyltransferase complex composed of a catalytic subcomplex, named MAC, and of an associated subcomplex, named MACOM. The MAC subcomplex is composed of Ime4/Mettl3 and Mettl14. The MACOM subcomplex is composed of fl(2)d, Flacc/Xio, Hakai, vir, and, in some cases of nito. In terms of tissue distribution, widely expressed during embryogenesis but shows enrichment in the neuroectoderm.

The protein resides in the nucleus. In terms of biological role, associated component of the WMM complex, a complex that mediates N6-methyladenosine (m6A) methylation of mRNAs, a modification that plays a role in the efficiency of mRNA splicing and is required for sex determination. In the WMM complex, acts as a key regulator of m6A methylation by bridging fl(2)d to the RNA-binding component nito. Required for sex determination and dosage compensation via Sxl alternative splicing: m6A methylation acts as a key regulator of Sxl pre-mRNA and promotes female-specific alternative splicing of Sxl, which determines female physiognomy. The sequence is that of Fl(2)d-associated complex component from Drosophila melanogaster (Fruit fly).